Reading from the N-terminus, the 156-residue chain is Ribonuclease H (156 aa).

In terms of domain architecture, RNase H type-1 spans 1 to 142; that stretch reads MNKQVEIFTD…CDELARQAAE (142 aa). Residues Asp10, Glu48, Asp70, and Asp134 each coordinate Mg(2+). Positions 135-156 are disordered; sequence ELARQAAENPTEDDIGYQPEPQ.

It belongs to the RNase H family. In terms of assembly, monomer. The cofactor is Mg(2+).

It localises to the cytoplasm. The catalysed reaction is Endonucleolytic cleavage to 5'-phosphomonoester.. Endonuclease that specifically degrades the RNA of RNA-DNA hybrids. This chain is Ribonuclease H, found in Vibrio cholerae serotype O1 (strain M66-2).